The following is a 155-amino-acid chain: F-box only protein 48 (155 aa).

The interval methionine 1–lysine 27 is disordered. Positions arginine 7–asparagine 19 are enriched in polar residues. One can recognise an F-box domain in the interval asparagine 32–histidine 79.

The protein is F-box only protein 48 (FBXO48) of Homo sapiens (Human).